The following is a 38-amino-acid chain: Kappa-theraphotoxin-Hm2a (38 aa).

3 cysteine pairs are disulfide-bonded: cysteine 2/cysteine 16, cysteine 9/cysteine 21, and cysteine 15/cysteine 32. Position 38 is a phenylalanine amide (phenylalanine 38).

It belongs to the neurotoxin 10 (Hwtx-1) family. 13 (Hntx-13) subfamily. Expressed by the venom gland.

The protein resides in the secreted. Its function is as follows. Inhibitor of voltage-gated potassium channels. It specifically inhibits Kv2.1/KCNB1 channels. The chain is Kappa-theraphotoxin-Hm2a from Heteroscodra maculata (Togo starburst tarantula).